The primary structure comprises 328 residues: P2Y purinoceptor 6 (328 aa).

Residues 1-27 (MERDNGTIQAPGLPPTTCVYREDFKRL) lie on the Extracellular side of the membrane. An N-linked (GlcNAc...) asparagine glycan is attached at N5. A helical transmembrane segment spans residues 28–48 (LLPPVYSVVLVVGLPLNVCVI). Residues 49–62 (AQICASRRTLTRSA) are Cytoplasmic-facing. Residues 63–83 (VYTLNLALADLLYACSLPLLI) traverse the membrane as a helical segment. Residues 84–101 (YNYARGDHWPFGDLACRL) lie on the Extracellular side of the membrane. A disulfide bond links C99 and C177. The helical transmembrane segment at 102-122 (VRFLFYANLHGSILFLTCISF) threads the bilayer. Residues 123 to 144 (QRYLGICHPLAPWHKRGGRRAA) lie on the Cytoplasmic side of the membrane. The chain crosses the membrane as a helical span at residues 145-165 (WVVCGVVWLVVTAQCLPTAVF). Over 166–194 (AATGIQRNRTVCYDLSPPILSTRYLPYGM) the chain is Extracellular. Residue N173 is glycosylated (N-linked (GlcNAc...) asparagine). A helical transmembrane segment spans residues 195–215 (ALTVIGFLLPFTALLACYCRM). Residues 216–236 (ARRLCRQDGPAGPVAQERRSK) lie on the Cytoplasmic side of the membrane. Residues 237-257 (AARMAVVVAAVFVISFLPFHI) traverse the membrane as a helical segment. Over 258–280 (TKTAYLAVRSTPGVSCPVLETFA) the chain is Extracellular. The helical transmembrane segment at 281–303 (AAYKGTRPFASANSVLDPILFYF) threads the bilayer. At 304–328 (TQQKFRRQPHDLLQKLTAKWQRQRV) the chain is on the cytoplasmic side.

It belongs to the G-protein coupled receptor 1 family. Abundantly expressed in various tissues including lung, stomach, intestine, spleen, mesentery, heart, and, most prominently, aorta.

The protein resides in the cell membrane. In terms of biological role, receptor for extracellular UTP &gt; ADP = 2-methylthio-ATP &gt; ADP-beta-S &gt; ATP = ATP-gamma-S. The activity of this receptor is mediated by G proteins which activate a phosphatidylinositol-calcium second messenger system. Functionally coupled to phospholipase C. The chain is P2Y purinoceptor 6 (P2ry6) from Rattus norvegicus (Rat).